A 600-amino-acid chain; its full sequence is Monooxygenase ptmN (600 aa).

The protein belongs to the FMO family. FAD is required as a cofactor.

It functions in the pathway secondary metabolite biosynthesis. Functionally, monooxygenase; part of the gene cluster that mediates the biosynthesis of the indole diterpenes penitrems. The geranylgeranyl diphosphate (GGPP) synthase ptmG catalyzes the first step in penitrem biosynthesis via conversion of farnesyl pyrophosphate and isopentyl pyrophosphate into geranylgeranyl pyrophosphate (GGPP). Condensation of indole-3-glycerol phosphate with GGPP by the prenyl transferase ptmC then forms 3-geranylgeranylindole (3-GGI). Epoxidation by the FAD-dependent monooxygenase ptmM leads to a epoxidized-GGI that is substrate of the terpene cyclase ptmB for cyclization to yield paspaline. Paspaline is subsequently converted to 13-desoxypaxilline by the cytochrome P450 monooxygenase ptmP, the latter being then converted to paxilline by the cytochrome P450 monooxygenase ptmQ. Paxilline is converted to beta-paxitriol via C-10 ketoreduction by the short-chain dehydrogenase ptmH which can be monoprenylated at the C-20 by the indole diterpene prenyltransferase ptmD. A two-step elimination (acetylation and elimination) process performed by the O-acetyltransferase ptmV and ptmI leads to the production of the prenylated form of penijanthine. The FAD-linked oxidoreductase ptmO then converts the prenylated form of penijanthine into PC-M5 which is in turn transformed into PC-M4 by the aromatic dimethylallyltransferase ptmE. Five sequential oxidative transformations performed by the cytochrome P450 monooxygenases ptmK, ptmU, ptmL, ptmN and ptmJ yield the various penitrem compounds. PtmK, ptmU and ptmM are involved in the formation of the key bicyclic ring of penitrem C via the formation of the intermediates secopenitrem D and penitrem D. PtmL catalyzes the epoxidation of penitrem D and C to yield penitrem B and F, respectively. PtmJ catalyzes the last benzylic hydroxylation to convert penitrem B to prenitrem E and penitrem F to penitrem A. This chain is Monooxygenase ptmN, found in Penicillium ochrochloron.